The sequence spans 606 residues: MRTRMTSTPLDKIRNFSIVAHIDHGKSTLSDRLIQTTGGLTAREMSAQVLDNMDIEKERGITIKAQTVRLTYKAADGETYILNLMDTPGHVDFAYEVSRSLAACEGSILVVDASQGVEAQTLANVYQAIDNNHEIVPVLNKVDLPAADVDRVKAQIEDVIGLDASDAVECSAKTGVGIPEVLEAIVTRLPPPKGDPNAPLKALLVDAWYDAYLGVVVLVRIFDGSLKAGQQVRMMQTGATHRIDKVGVFTPKATDVEYLGPGEVGFFTASIKEVADAAVGDTITDEKKPTAEALKGFKEVVPVVFCGLFPVDAADFEDLRAAVGKLRLNDASFTYEMESSAALGFGFRCGFLGLLHLEIIQERLSREFDLDLIATAPSVVYKIKLRNGDEIELHNPADLPDVMQIEEIAEPWIKATIFTPDDYLGGVIKLCQDRRGMQRELSYVGSRAMVVYDLPLNEVVFDFYDRLKSISKGYASFDYQLEDYRAGDLVKMSILVNSEPVDALSMLVHRSRAESRGRGMCEKMKELIPQHMFVIPIQAAIGGRIIARETVRALRKDVTAKCYGGDASRKKKLLEKQKEGKKRMRQFGKVEIPQEAFIAALKMDED.

Residues Asp-11–Lys-193 enclose the tr-type G domain. GTP contacts are provided by residues Asp-23–Thr-28 and Asn-140–Asp-143.

This sequence belongs to the TRAFAC class translation factor GTPase superfamily. Classic translation factor GTPase family. LepA subfamily.

It localises to the cell inner membrane. The enzyme catalyses GTP + H2O = GDP + phosphate + H(+). Functionally, required for accurate and efficient protein synthesis under certain stress conditions. May act as a fidelity factor of the translation reaction, by catalyzing a one-codon backward translocation of tRNAs on improperly translocated ribosomes. Back-translocation proceeds from a post-translocation (POST) complex to a pre-translocation (PRE) complex, thus giving elongation factor G a second chance to translocate the tRNAs correctly. Binds to ribosomes in a GTP-dependent manner. This chain is Elongation factor 4, found in Caulobacter vibrioides (strain ATCC 19089 / CIP 103742 / CB 15) (Caulobacter crescentus).